Reading from the N-terminus, the 315-residue chain is Protein ORANGE-LIKE, chloroplastic (315 aa).

A chloroplast-targeting transit peptide spans 1–16; it reads MTCFSSATPHRHHLLL. Helical transmembrane passes span 155-175 and 207-227; these read LYSTSVALISGIIFFGGLIAP and IVASFSGGAVGVISTLMLIEV. Residues 225–307 form a CR-type zinc finger; the sequence is IEVNNVKQQE…CTGMVTASEH (83 aa). The stretch at 238–245 is one CXXCXGXG motif repeat; that stretch reads CKYCLGTG. The CXXCXXXG motif repeat unit spans residues 249 to 256; sequence CARCSASG. One copy of the CXXCXGXG motif repeat lies at 282–289; that stretch reads CLNCSGAG. The stretch at 293–300 is one CXXCXXXG motif repeat; that stretch reads CPTCLCTG.

This sequence belongs to the orange-like family. As to quaternary structure, interacts with PSY1.

Its subcellular location is the plastid. It is found in the chloroplast membrane. Its function is as follows. May be associated with accumulation of carotenoids in chromoplasts. The chain is Protein ORANGE-LIKE, chloroplastic (ORLIKE) from Arabidopsis thaliana (Mouse-ear cress).